The primary structure comprises 184 residues: dTTP/UTP pyrophosphatase (184 aa).

Asp65 acts as the Proton acceptor in catalysis.

Belongs to the Maf family. YhdE subfamily. Requires a divalent metal cation as cofactor.

It localises to the cytoplasm. The enzyme catalyses dTTP + H2O = dTMP + diphosphate + H(+). The catalysed reaction is UTP + H2O = UMP + diphosphate + H(+). Functionally, nucleoside triphosphate pyrophosphatase that hydrolyzes dTTP and UTP. May have a dual role in cell division arrest and in preventing the incorporation of modified nucleotides into cellular nucleic acids. In Thermococcus onnurineus (strain NA1), this protein is dTTP/UTP pyrophosphatase.